A 484-amino-acid polypeptide reads, in one-letter code: Protein nucleotidyltransferase YdiU (484 aa).

The ATP site is built by G81, G83, R84, K103, D115, G116, R166, and R173. D244 serves as the catalytic Proton acceptor. 2 residues coordinate Mg(2+): N245 and D254. An ATP-binding site is contributed by D254.

This sequence belongs to the SELO family. It depends on Mg(2+) as a cofactor. The cofactor is Mn(2+).

The catalysed reaction is L-seryl-[protein] + ATP = 3-O-(5'-adenylyl)-L-seryl-[protein] + diphosphate. It catalyses the reaction L-threonyl-[protein] + ATP = 3-O-(5'-adenylyl)-L-threonyl-[protein] + diphosphate. The enzyme catalyses L-tyrosyl-[protein] + ATP = O-(5'-adenylyl)-L-tyrosyl-[protein] + diphosphate. It carries out the reaction L-histidyl-[protein] + UTP = N(tele)-(5'-uridylyl)-L-histidyl-[protein] + diphosphate. The catalysed reaction is L-seryl-[protein] + UTP = O-(5'-uridylyl)-L-seryl-[protein] + diphosphate. It catalyses the reaction L-tyrosyl-[protein] + UTP = O-(5'-uridylyl)-L-tyrosyl-[protein] + diphosphate. In terms of biological role, nucleotidyltransferase involved in the post-translational modification of proteins. It can catalyze the addition of adenosine monophosphate (AMP) or uridine monophosphate (UMP) to a protein, resulting in modifications known as AMPylation and UMPylation. In Shewanella baltica (strain OS223), this protein is Protein nucleotidyltransferase YdiU.